We begin with the raw amino-acid sequence, 133 residues long: Interleukin-4 (133 aa).

An N-terminal signal peptide occupies residues 1–24 (MGLTSQLIPMLVCLLACTSNFVHG). 3 cysteine pairs are disulfide-bonded: Cys-27–Cys-133, Cys-48–Cys-85, and Cys-70–Cys-105. Residues Asn-62, Asn-96, and Asn-102 are each glycosylated (N-linked (GlcNAc...) asparagine).

The protein belongs to the IL-4/IL-13 family.

It is found in the secreted. Its function is as follows. Participates in at least several B-cell activation processes as well as of other cell types. It is a costimulator of DNA-synthesis. It induces the expression of class II MHC molecules on resting B-cells. It enhances both secretion and cell surface expression of IgE and IgG1. It also regulates the expression of the low affinity Fc receptor for IgE (CD23) on both lymphocytes and monocytes. Positively regulates IL31RA expression in macrophages. Stimulates autophagy in dendritic cells by interfering with mTORC1 signaling and through the induction of RUFY4. The polypeptide is Interleukin-4 (IL4) (Tursiops truncatus (Atlantic bottle-nosed dolphin)).